A 451-amino-acid chain; its full sequence is Charged multivesicular body protein 7 (451 aa).

The segment at 1 to 22 (MWSPEREAQAPTGGDPAGLLPP) is disordered. The residue at position 232 (serine 232) is a Phosphoserine. Residues 248–312 (EQLLSRKVES…DTVQGILDRI (65 aa)) are a coiled coil. Residue threonine 409 is modified to Phosphothreonine. Phosphoserine is present on residues serine 411, serine 432, and serine 442. Residues 431 to 451 (LSEGGLIPSSKSPKRQLEPTL) are disordered.

The protein belongs to the SNF7 family. As to quaternary structure, interacts with CHMP4B, but not with VPS25. Interacts with LEMD2 (via C-terminus).

Its subcellular location is the cytoplasm. The protein localises to the nucleus envelope. ESCRT-III-like protein required to recruit the ESCRT-III complex to the nuclear envelope (NE) during late anaphase. Together with SPAST, the ESCRT-III complex promotes NE sealing and mitotic spindle disassembly during late anaphase. Recruited to the reforming NE during anaphase by LEMD2. Plays a role in the endosomal sorting pathway. In Mus musculus (Mouse), this protein is Charged multivesicular body protein 7 (Chmp7).